The sequence spans 679 residues: Glycine--tRNA ligase beta subunit (679 aa).

The protein belongs to the class-II aminoacyl-tRNA synthetase family. Tetramer of two alpha and two beta subunits.

It is found in the cytoplasm. The catalysed reaction is tRNA(Gly) + glycine + ATP = glycyl-tRNA(Gly) + AMP + diphosphate. The protein is Glycine--tRNA ligase beta subunit of Streptococcus uberis (strain ATCC BAA-854 / 0140J).